A 312-amino-acid chain; its full sequence is Methionyl-tRNA formyltransferase (312 aa).

109 to 112 (SLLP) contacts (6S)-5,6,7,8-tetrahydrofolate.

The protein belongs to the Fmt family.

It carries out the reaction L-methionyl-tRNA(fMet) + (6R)-10-formyltetrahydrofolate = N-formyl-L-methionyl-tRNA(fMet) + (6S)-5,6,7,8-tetrahydrofolate + H(+). Its function is as follows. Attaches a formyl group to the free amino group of methionyl-tRNA(fMet). The formyl group appears to play a dual role in the initiator identity of N-formylmethionyl-tRNA by promoting its recognition by IF2 and preventing the misappropriation of this tRNA by the elongation apparatus. The polypeptide is Methionyl-tRNA formyltransferase (Anaeromyxobacter dehalogenans (strain 2CP-C)).